The following is an 830-amino-acid chain: DNA-directed RNA polymerase subunit beta'' (830 aa).

4 residues coordinate Zn(2+): C219, C291, C298, and C301.

It belongs to the RNA polymerase beta' chain family. RpoC2 subfamily. In terms of assembly, in plastids the minimal PEP RNA polymerase catalytic core is composed of four subunits: alpha, beta, beta', and beta''. When a (nuclear-encoded) sigma factor is associated with the core the holoenzyme is formed, which can initiate transcription. Zn(2+) is required as a cofactor.

The protein localises to the plastid. Its subcellular location is the chloroplast. The catalysed reaction is RNA(n) + a ribonucleoside 5'-triphosphate = RNA(n+1) + diphosphate. DNA-dependent RNA polymerase catalyzes the transcription of DNA into RNA using the four ribonucleoside triphosphates as substrates. This chain is DNA-directed RNA polymerase subunit beta'' (rpoC2), found in Euglena gracilis.